We begin with the raw amino-acid sequence, 651 residues long: Beta-mannosyltransferase 7 (651 aa).

Residues 1 to 19 (MKLEMSSYLHKVPNTGITN) are Cytoplasmic-facing. Residues 20-42 (LSNSKSIVFIMFCATLLFIITSS) traverse the membrane as a helical segment. At 43-651 (RYLTGSESLG…VKIDEKSEET (609 aa)) the chain is on the extracellular side. N-linked (GlcNAc...) asparagine glycosylation is found at N271 and N423.

Belongs to the BMT family.

The protein localises to the membrane. In terms of biological role, beta-mannosyltransferase involved in cell wall biosynthesis through beta-1,2-mannosylation of cell wall phosphopeptidomannan. This is Beta-mannosyltransferase 7 (BMT7) from Candida albicans (strain SC5314 / ATCC MYA-2876) (Yeast).